Consider the following 907-residue polypeptide: Translation initiation factor IF-2 (907 aa).

The interval 26-317 (DAGMKKSSSD…KPKSMQHGFD (292 aa)) is disordered. Composition is skewed to basic and acidic residues over residues 28–44 (GMKK…EKQK) and 101–248 (SAIE…DTDY). Over residues 299 to 308 (KGGRKGKLSK) the composition is skewed to basic residues. One can recognise a tr-type G domain in the interval 406-575 (PRAPVVTIMG…LLQAEVLELT (170 aa)). A G1 region spans residues 415-422 (GHVDHGKT). Residue 415–422 (GHVDHGKT) coordinates GTP. The G2 stretch occupies residues 440–444 (GITQH). The segment at 461-464 (DTPG) is G3. GTP-binding positions include 461 to 465 (DTPGH) and 515 to 518 (NKID). Residues 515–518 (NKID) form a G4 region. The G5 stretch occupies residues 551-553 (SAK).

Belongs to the TRAFAC class translation factor GTPase superfamily. Classic translation factor GTPase family. IF-2 subfamily.

It is found in the cytoplasm. Functionally, one of the essential components for the initiation of protein synthesis. Protects formylmethionyl-tRNA from spontaneous hydrolysis and promotes its binding to the 30S ribosomal subunits. Also involved in the hydrolysis of GTP during the formation of the 70S ribosomal complex. In Vibrio vulnificus (strain YJ016), this protein is Translation initiation factor IF-2.